A 360-amino-acid chain; its full sequence is Histidinol-phosphate aminotransferase (360 aa).

Lys213 is subject to N6-(pyridoxal phosphate)lysine.

It belongs to the class-II pyridoxal-phosphate-dependent aminotransferase family. Histidinol-phosphate aminotransferase subfamily. Homodimer. Pyridoxal 5'-phosphate is required as a cofactor.

It catalyses the reaction L-histidinol phosphate + 2-oxoglutarate = 3-(imidazol-4-yl)-2-oxopropyl phosphate + L-glutamate. It participates in amino-acid biosynthesis; L-histidine biosynthesis; L-histidine from 5-phospho-alpha-D-ribose 1-diphosphate: step 7/9. This chain is Histidinol-phosphate aminotransferase, found in Baumannia cicadellinicola subsp. Homalodisca coagulata.